The chain runs to 220 residues: 1-Cys peroxiredoxin B (220 aa).

Residues 4 to 165 form the Thioredoxin domain; sequence LTLGDVVPDL…VLRATDALLT (162 aa). Catalysis depends on C46, which acts as the Cysteine sulfenic acid (-SOH) intermediate. Positions 195–218 match the Bipartite nuclear localization signal motif; that stretch reads KARFPAGFETAQLPSNKCYLRFTQ.

It belongs to the peroxiredoxin family. Prx6 subfamily.

The protein resides in the nucleus. The protein localises to the cytoplasm. The enzyme catalyses a hydroperoxide + [thioredoxin]-dithiol = an alcohol + [thioredoxin]-disulfide + H2O. Functionally, thiol-specific peroxidase that catalyzes the reduction of hydrogen peroxide and organic hydroperoxides to water and alcohols, respectively. Seems to contribute to the inhibition of germination during stress. The sequence is that of 1-Cys peroxiredoxin B from Oryza sativa subsp. indica (Rice).